Reading from the N-terminus, the 55-residue chain is Large ribosomal subunit protein bL33A (55 aa).

The protein belongs to the bacterial ribosomal protein bL33 family.

The protein is Large ribosomal subunit protein bL33A of Salinispora tropica (strain ATCC BAA-916 / DSM 44818 / JCM 13857 / NBRC 105044 / CNB-440).